The sequence spans 147 residues: Heavy metal-dependent transcription regulator 2 (147 aa).

An HTH merR-type domain is found at 1–69 (MNIGEASKTS…VEQIKELLAL (69 aa)). A DNA-binding region (H-T-H motif) is located at residues 3 to 22 (IGEASKTSGVSSKMIRYYEQ).

Its subcellular location is the cytoplasm. Functionally, transcriptional regulator involved in acid tolerance. Binds copper. This is Heavy metal-dependent transcription regulator 2 (hmrR2) from Rhizobium meliloti (strain 1021) (Ensifer meliloti).